Here is a 582-residue protein sequence, read N- to C-terminus: Zinc finger protein somi-1 (582 aa).

2 disordered regions span residues 179-251 (LRPE…NNTD) and 352-377 (SAEP…KKEQ). Over residues 188–226 (TQKSTNGVHRSTSNSSAETLRNNSVSAATVSPSDDNSLN) the composition is skewed to polar residues. A compositionally biased stretch (low complexity) spans 227–244 (SPALTSSGSAGSGTPPLG). A compositionally biased stretch (basic and acidic residues) spans 352–368 (SAEPMKRHRVEAHEKQS). The C2H2-type; Degenerate zinc finger occupies 454–477 (YICEDCDFVTVYKGNMKRHLNTCH). A disordered region spans residues 513–582 (AHKANSSRGR…PPPPPPPMLL (70 aa)). Residues 551 to 570 (LLESLASSSSSMGGYSNGNN) show a composition bias toward low complexity. Pro residues predominate over residues 572 to 582 (QPPPPPPPMLL).

May interact with swsn-9; the interaction promotes hypodermal differentiation. In terms of tissue distribution, expressed in hypodermal seam cells, the somatic gonad and vulval precursor cells, body wall muscle and head neurons.

It is found in the nucleus. DNA-binding protein which binds to the promoters of let-60, lin-14 and lin-28, possibly to regulate genes involved in hypodermal and vulval development. Together with miRNAs mir-84 and let-7 may direct terminal differentiation of the seam cells, exit from the molting cycle, and vulva formation. Does not regulate the expression of mir-84. May promote hypodermal differentiation in association with swsn-9, a component of SWI/SNF chromatin remodeling complexes. The sequence is that of Zinc finger protein somi-1 from Caenorhabditis elegans.